We begin with the raw amino-acid sequence, 120 residues long: MYLFSEYDTFWIYLSISSLIPILAFSISRSLAPISKGAEKATSYESGIEPMGDTWIQFRIRYYMFALVFVVFDVETVFLYPWAMSFDILGLFTFIEAFIFVIILIVGLVYAWRKGALEWS.

The next 3 membrane-spanning stretches (helical) occupy residues Y7–I27, M64–M84, and I88–L108.

This sequence belongs to the complex I subunit 3 family. As to quaternary structure, NDH is composed of at least 16 different subunits, 5 of which are encoded in the nucleus.

It is found in the plastid. Its subcellular location is the chloroplast thylakoid membrane. It catalyses the reaction a plastoquinone + NADH + (n+1) H(+)(in) = a plastoquinol + NAD(+) + n H(+)(out). It carries out the reaction a plastoquinone + NADPH + (n+1) H(+)(in) = a plastoquinol + NADP(+) + n H(+)(out). NDH shuttles electrons from NAD(P)H:plastoquinone, via FMN and iron-sulfur (Fe-S) centers, to quinones in the photosynthetic chain and possibly in a chloroplast respiratory chain. The immediate electron acceptor for the enzyme in this species is believed to be plastoquinone. Couples the redox reaction to proton translocation, and thus conserves the redox energy in a proton gradient. This Cryptomeria japonica (Japanese cedar) protein is NAD(P)H-quinone oxidoreductase subunit 3, chloroplastic.